Here is a 64-residue protein sequence, read N- to C-terminus: Large ribosomal subunit protein bL28 (64 aa).

Positions 1 to 23 (MARKDQISHRGPLSGNNRSHALN) are disordered.

Belongs to the bacterial ribosomal protein bL28 family.

The sequence is that of Large ribosomal subunit protein bL28 from Mesomycoplasma hyopneumoniae (strain J / ATCC 25934 / NCTC 10110) (Mycoplasma hyopneumoniae).